A 601-amino-acid chain; its full sequence is Phosphomethylpyrimidine synthase (601 aa).

Substrate is bound by residues N224, M253, Y282, H318, 338–340 (SRG), 379–382 (DGLR), and E418. Zn(2+) is bound at residue H422. Y445 contacts substrate. H486 is a Zn(2+) binding site. 3 residues coordinate [4Fe-4S] cluster: C566, C569, and C574.

It belongs to the ThiC family. In terms of assembly, homodimer. Requires [4Fe-4S] cluster as cofactor.

The catalysed reaction is 5-amino-1-(5-phospho-beta-D-ribosyl)imidazole + S-adenosyl-L-methionine = 4-amino-2-methyl-5-(phosphooxymethyl)pyrimidine + CO + 5'-deoxyadenosine + formate + L-methionine + 3 H(+). It participates in cofactor biosynthesis; thiamine diphosphate biosynthesis. In terms of biological role, catalyzes the synthesis of the hydroxymethylpyrimidine phosphate (HMP-P) moiety of thiamine from aminoimidazole ribotide (AIR) in a radical S-adenosyl-L-methionine (SAM)-dependent reaction. This Xylella fastidiosa (strain 9a5c) protein is Phosphomethylpyrimidine synthase.